The primary structure comprises 264 residues: Leukocyte receptor cluster member 1 (264 aa).

Disordered stretches follow at residues 1 to 37 (MNIL…RERR) and 49 to 76 (FLRK…SGPV). The segment covering 12–37 (RNKDNVARVRRDEAQAREEEKERERR) has biased composition (basic and acidic residues). Residues 16–46 (NVARVRRDEAQAREEEKERERRVLLAQQEAR) adopt a coiled-coil conformation. The residue at position 59 (Ser59) is a Phosphoserine. The segment covering 59-75 (SLPELEAAEAGAPGSGP) has biased composition (low complexity). The stretch at 89–115 (VIRGNKEYKEEKRQEKERQEKALGILT) forms a coiled coil. The tract at residues 118–264 (GQSAAEAQTQ…PRQQDPHLTH (147 aa)) is disordered. Basic and acidic residues-rich tracts occupy residues 146–162 (PDEK…EMQK) and 170–214 (HGGD…RSRA). Residues 196 to 222 (LDQLRAERLRREAAERSRAEALLARVQ) adopt a coiled-coil conformation. Ser245 is subject to Phosphoserine.

This is Leukocyte receptor cluster member 1 (LENG1) from Homo sapiens (Human).